A 178-amino-acid chain; its full sequence is Ribosome maturation factor RimP (178 aa).

Belongs to the RimP family.

The protein resides in the cytoplasm. In terms of biological role, required for maturation of 30S ribosomal subunits. The chain is Ribosome maturation factor RimP from Streptococcus pyogenes serotype M1.